A 289-amino-acid chain; its full sequence is MQIPRSVGTHDGSFHADEVTACALLIMFDLVDENKIVRTRDPQKLAQCEYVCDVGGRYSTEHKRFDHHQVSYTGSWSSAGMVLDYLHGLGFLSHDEYEYLNNTLVHGVDEQDNGRFFSKEGFCSFSDIIKIYNPLEEGGNTDKEFFFALRFAIDLLTRLREKFCYDRVCRDIVKQVMEKESVCLRFDRPLAWQENFFSLGGESHPAAFVSFPCSDQWILRGIPPTLDRRMEVRIPFPEEWAGLLGDQLVQATGIPGAIFCHKGLFLSVWDSQESCEEALNLVLKQQRLV.

The protein belongs to the MYG1 family.

The protein is MYG1 protein CT_386 of Chlamydia trachomatis serovar D (strain ATCC VR-885 / DSM 19411 / UW-3/Cx).